The primary structure comprises 340 residues: ATP synthase subunit a (340 aa).

The N-terminal stretch at 1–32 (MKRVNVIQAKAFLKVIALLVPLLLNANGPAFA) is a signal peptide. The next 6 helical transmembrane spans lie at 107-127 (HVVM…LVGS), 172-192 (LLTV…PYGA), 197-217 (NINV…VAAL), 236-256 (ALWI…PVAL), 269-289 (IVIL…VAVV), and 296-316 (IFIY…FTML).

It belongs to the ATPase A chain family. In terms of assembly, F-type ATPases have 2 components, CF(1) - the catalytic core - and CF(0) - the membrane proton channel. CF(1) has five subunits: alpha(3), beta(3), gamma(1), delta(1), epsilon(1). CF(0) has four main subunits: a, b, b' and c.

The protein resides in the cell inner membrane. Key component of the proton channel; it plays a direct role in the translocation of protons across the membrane. The polypeptide is ATP synthase subunit a (Pelodictyon phaeoclathratiforme (strain DSM 5477 / BU-1)).